Here is a 240-residue protein sequence, read N- to C-terminus: Protein RoBo-1 (240 aa).

The signal sequence occupies residues 1–26 (MSWFLVLKCLLTVCIISHLSVSSTES). A glycan (N-linked (GlcNAc...) asparagine) is linked at Asn-42. 5 cysteine pairs are disulfide-bonded: Cys-47–Cys-76, Cys-81–Cys-102, Cys-103–Cys-108, Cys-127–Cys-151, and Cys-144–Cys-171. Asn-153 carries N-linked (GlcNAc...) asparagine glycosylation.

It belongs to the CNF-like-inhibitor family. N-glycosylated. In terms of tissue distribution, expressed abundantly in bone, including the lengthening growth plate where cartilage is remodeled into bone.

Its subcellular location is the secreted. In terms of biological role, may play a novel role in the growth or remodeling of bone. This chain is Protein RoBo-1, found in Rattus norvegicus (Rat).